The primary structure comprises 306 residues: Ribosomal protein L11 methyltransferase (306 aa).

S-adenosyl-L-methionine is bound by residues Thr152, Gly179, Asp201, and Asn243.

The protein belongs to the methyltransferase superfamily. PrmA family.

The protein resides in the cytoplasm. The catalysed reaction is L-lysyl-[protein] + 3 S-adenosyl-L-methionine = N(6),N(6),N(6)-trimethyl-L-lysyl-[protein] + 3 S-adenosyl-L-homocysteine + 3 H(+). Its function is as follows. Methylates ribosomal protein L11. The sequence is that of Ribosomal protein L11 methyltransferase from Geobacter sp. (strain M21).